The primary structure comprises 507 residues: Putative F-box/LRR-repeat protein At4g00320 (507 aa).

The F-box domain maps to 12–60 (RDGISGLPDAMICHILSFLPTKVAASTTVLAKRWKPLLAFMPNLDFDES). LRR repeat units lie at residues 135 to 163 (RGFG…KIQF), 187 to 212 (YVKM…LLMN), 214 to 240 (IWKE…KFSR), 317 to 348 (ILYL…TIRT), and 349 to 374 (GVHI…VFEG).

This chain is Putative F-box/LRR-repeat protein At4g00320, found in Arabidopsis thaliana (Mouse-ear cress).